The following is a 73-amino-acid chain: Large ribosomal subunit protein uL29 (73 aa).

It belongs to the universal ribosomal protein uL29 family.

In Aquifex aeolicus (strain VF5), this protein is Large ribosomal subunit protein uL29 (rpmC).